Consider the following 116-residue polypeptide: Large ribosomal subunit protein uL18 (116 aa).

Belongs to the universal ribosomal protein uL18 family. As to quaternary structure, part of the 50S ribosomal subunit; part of the 5S rRNA/L5/L18/L25 subcomplex. Contacts the 5S and 23S rRNAs.

Its function is as follows. This is one of the proteins that bind and probably mediate the attachment of the 5S RNA into the large ribosomal subunit, where it forms part of the central protuberance. The protein is Large ribosomal subunit protein uL18 of Shewanella piezotolerans (strain WP3 / JCM 13877).